The following is an 88-amino-acid chain: Mitochondrial import inner membrane translocase subunit Tim10 (88 aa).

Residues C29–C54 carry the Twin CX3C motif motif. Intrachain disulfides connect C29–C54 and C33–C50.

The protein belongs to the small Tim family. As to quaternary structure, heterohexamer; composed of 3 copies of TIMM9 and 3 copies of TIMM10/TIM10A, named soluble 70 kDa complex. The complex forms a 6-bladed alpha-propeller structure and associates with the TIMM22 component of the TIM22 complex. Interacts with multi-pass transmembrane proteins in transit.

The protein resides in the mitochondrion inner membrane. Its function is as follows. Mitochondrial intermembrane chaperone that participates in the import and insertion of multi-pass transmembrane proteins into the mitochondrial inner membrane. May also be required for the transfer of beta-barrel precursors from the TOM complex to the sorting and assembly machinery (SAM complex) of the outer membrane. Acts as a chaperone-like protein that protects the hydrophobic precursors from aggregation and guide them through the mitochondrial intermembrane space. In Danio rerio (Zebrafish), this protein is Mitochondrial import inner membrane translocase subunit Tim10 (timm10).